A 323-amino-acid chain; its full sequence is o-succinylbenzoate synthase (323 aa).

The active-site Proton donor is the Lys134. Mg(2+)-binding residues include Asp162, Glu191, and Asp214. The active-site Proton acceptor is the Lys236.

The protein belongs to the mandelate racemase/muconate lactonizing enzyme family. MenC type 1 subfamily. The cofactor is a divalent metal cation.

It catalyses the reaction (1R,6R)-6-hydroxy-2-succinyl-cyclohexa-2,4-diene-1-carboxylate = 2-succinylbenzoate + H2O. Its pathway is quinol/quinone metabolism; 1,4-dihydroxy-2-naphthoate biosynthesis; 1,4-dihydroxy-2-naphthoate from chorismate: step 4/7. The protein operates within quinol/quinone metabolism; menaquinone biosynthesis. Converts 2-succinyl-6-hydroxy-2,4-cyclohexadiene-1-carboxylate (SHCHC) to 2-succinylbenzoate (OSB). This Yersinia pseudotuberculosis serotype O:3 (strain YPIII) protein is o-succinylbenzoate synthase.